Consider the following 225-residue polypeptide: Ribose-5-phosphate isomerase A (225 aa).

Substrate is bound by residues 32 to 35, 85 to 88, and 98 to 101; these read TGST, DGAD, and KGGG. E107 serves as the catalytic Proton acceptor. K125 provides a ligand contact to substrate.

Belongs to the ribose 5-phosphate isomerase family. Homodimer.

The enzyme catalyses aldehydo-D-ribose 5-phosphate = D-ribulose 5-phosphate. It participates in carbohydrate degradation; pentose phosphate pathway; D-ribose 5-phosphate from D-ribulose 5-phosphate (non-oxidative stage): step 1/1. Catalyzes the reversible conversion of ribose-5-phosphate to ribulose 5-phosphate. This chain is Ribose-5-phosphate isomerase A, found in Hahella chejuensis (strain KCTC 2396).